The sequence spans 227 residues: Orotidine 5'-phosphate decarboxylase (227 aa).

Substrate-binding positions include Asp-8, Lys-30, 59–68 (DLKLYDIPNT), Thr-118, Arg-178, Gln-187, Gly-207, and Arg-208. Lys-61 acts as the Proton donor in catalysis.

This sequence belongs to the OMP decarboxylase family. Type 1 subfamily. As to quaternary structure, homodimer.

The catalysed reaction is orotidine 5'-phosphate + H(+) = UMP + CO2. Its pathway is pyrimidine metabolism; UMP biosynthesis via de novo pathway; UMP from orotate: step 2/2. In terms of biological role, catalyzes the decarboxylation of orotidine 5'-monophosphate (OMP) to uridine 5'-monophosphate (UMP). This chain is Orotidine 5'-phosphate decarboxylase, found in Sulfurimonas denitrificans (strain ATCC 33889 / DSM 1251) (Thiomicrospira denitrificans (strain ATCC 33889 / DSM 1251)).